Here is a 72-residue protein sequence, read N- to C-terminus: IRCFITPDVTSQACPDGQNICYTKTWCDNFCGMRGKRVDLGCAATCPTVKPGVDIKCCSTDNCNPFPTRERS.

Disulfide bonds link Cys3-Cys21, Cys14-Cys42, Cys27-Cys31, Cys46-Cys57, and Cys58-Cys63.

Belongs to the three-finger toxin family. Long-chain subfamily. Type II alpha-neurotoxin sub-subfamily. Expressed by the venom gland.

Its subcellular location is the secreted. In terms of biological role, binds with high affinity to muscular (alpha-1/CHRNA1) and neuronal (alpha-7/CHRNA7) nicotinic acetylcholine receptor (nAChR) and inhibits acetylcholine from binding to the receptor, thereby impairing neuromuscular and neuronal transmission. The chain is Long neurotoxin 1 from Naja anchietae (Anchieta's cobra).